The sequence spans 505 residues: Glutamate--tRNA ligase (505 aa).

The short motif at proline 12–threonine 22 is the 'HIGH' region element. The 'KMSKS' region signature appears at lysine 253–arginine 257. Lysine 256 lines the ATP pocket.

The protein belongs to the class-I aminoacyl-tRNA synthetase family. Glutamate--tRNA ligase type 1 subfamily. Monomer.

The protein resides in the cytoplasm. It carries out the reaction tRNA(Glu) + L-glutamate + ATP = L-glutamyl-tRNA(Glu) + AMP + diphosphate. In terms of biological role, catalyzes the attachment of glutamate to tRNA(Glu) in a two-step reaction: glutamate is first activated by ATP to form Glu-AMP and then transferred to the acceptor end of tRNA(Glu). The polypeptide is Glutamate--tRNA ligase (Chlamydia abortus (strain DSM 27085 / S26/3) (Chlamydophila abortus)).